Consider the following 126-residue polypeptide: Histone H2B type 1-O (126 aa).

Residues 1-12 (MPDPAKSAPAPK) are compositionally biased toward low complexity. The disordered stretch occupies residues 1–35 (MPDPAKSAPAPKKGSKKAVTKAQKKDGKKRKRSRK). The residue at position 2 (P2) is an N-acetylproline; partial. K6 carries the N6-(2-hydroxyisobutyryl)lysine; alternate modification. An N6-(beta-hydroxybutyryl)lysine; alternate modification is found at K6. At K6 the chain carries N6-acetyllysine; alternate. The residue at position 6 (K6) is an N6-butyryllysine; alternate. K6 carries the post-translational modification N6-crotonyllysine; alternate. Residue K6 is modified to N6-lactoyllysine; alternate. K6 is covalently cross-linked (Glycyl lysine isopeptide (Lys-Gly) (interchain with G-Cter in SUMO2); alternate). At S7 the chain carries ADP-ribosylserine. K12 carries the N6-(beta-hydroxybutyryl)lysine; alternate modification. N6-acetyllysine; alternate is present on residues K12 and K13. An N6-crotonyllysine; alternate mark is found at K12 and K13. Residue K12 is modified to N6-lactoyllysine; alternate. An N6-(2-hydroxyisobutyryl)lysine; alternate modification is found at K13. S15 is subject to Phosphoserine; by STK4/MST1. An N6-acetyllysine; alternate mark is found at K16, K17, K21, and K24. K16, K17, K21, and K24 each carry N6-crotonyllysine; alternate. N6-lactoyllysine; alternate is present on residues K16, K17, K21, and K24. An N6-(beta-hydroxybutyryl)lysine; alternate mark is found at K17 and K21. N6-glutaryllysine; alternate is present on K17. N6-(2-hydroxyisobutyryl)lysine; alternate occurs at positions 21 and 24. At K21 the chain carries N6-butyryllysine; alternate. A Glycyl lysine isopeptide (Lys-Gly) (interchain with G-Cter in SUMO2); alternate cross-link involves residue K21. Position 25 is an N6-(2-hydroxyisobutyryl)lysine (K25). K35 carries the N6-(2-hydroxyisobutyryl)lysine; alternate modification. K35 carries the post-translational modification N6-(beta-hydroxybutyryl)lysine; alternate. An N6-crotonyllysine; alternate modification is found at K35. K35 bears the N6-glutaryllysine; alternate mark. K35 is subject to N6-succinyllysine; alternate. A Glycyl lysine isopeptide (Lys-Gly) (interchain with G-Cter in ubiquitin); alternate cross-link involves residue K35. E36 is subject to PolyADP-ribosyl glutamic acid. Phosphoserine; by AMPK is present on S37. N6-(2-hydroxyisobutyryl)lysine; alternate occurs at positions 44, 47, and 58. An N6-lactoyllysine; alternate modification is found at K44. An N6-glutaryllysine; alternate mark is found at K44 and K47. K47 is modified (N6-methyllysine; alternate). K58 is modified (N6,N6-dimethyllysine; alternate). Position 80 is a dimethylated arginine (R80). Residue K86 is modified to N6-(2-hydroxyisobutyryl)lysine; alternate. K86 bears the N6-(beta-hydroxybutyryl)lysine; alternate mark. K86 bears the N6-acetyllysine; alternate mark. At K86 the chain carries N6-lactoyllysine; alternate. Position 86 is an N6,N6,N6-trimethyllysine; alternate (K86). Omega-N-methylarginine occurs at positions 87 and 93. K109 carries the N6-(2-hydroxyisobutyryl)lysine; alternate modification. K109 bears the N6-lactoyllysine; alternate mark. K109 carries the post-translational modification N6-glutaryllysine; alternate. K109 bears the N6-methyllysine; alternate mark. The O-linked (GlcNAc) serine glycan is linked to S113. Position 116 is a phosphothreonine (T116). An N6-(2-hydroxyisobutyryl)lysine; alternate mark is found at K117 and K121. 2 positions are modified to N6-(beta-hydroxybutyryl)lysine; alternate: K117 and K121. An N6-lactoyllysine; alternate mark is found at K117 and K121. N6-glutaryllysine; alternate is present on residues K117 and K121. 2 positions are modified to N6-succinyllysine; alternate: K117 and K121. K117 is subject to N6-malonyllysine; alternate. Residue K117 is modified to N6-methylated lysine; alternate. K121 is covalently cross-linked (Glycyl lysine isopeptide (Lys-Gly) (interchain with G-Cter in ubiquitin); alternate).

The protein belongs to the histone H2B family. In terms of assembly, the nucleosome is a histone octamer containing two molecules each of H2A, H2B, H3 and H4 assembled in one H3-H4 heterotetramer and two H2A-H2B heterodimers. The octamer wraps approximately 147 bp of DNA. In terms of processing, monoubiquitination at Lys-35 (H2BK34Ub) by the MSL1/MSL2 dimer is required for histone H3 'Lys-4' (H3K4me) and 'Lys-79' (H3K79me) methylation and transcription activation at specific gene loci, such as HOXA9 and MEIS1 loci. Similarly, monoubiquitination at Lys-121 (H2BK120Ub) by the RNF20/40 complex gives a specific tag for epigenetic transcriptional activation and is also prerequisite for histone H3 'Lys-4' and 'Lys-79' methylation. It also functions cooperatively with the FACT dimer to stimulate elongation by RNA polymerase II. H2BK120Ub also acts as a regulator of mRNA splicing: deubiquitination by USP49 is required for efficient cotranscriptional splicing of a large set of exons. Phosphorylation at Ser-37 (H2BS36ph) by AMPK in response to stress promotes transcription. Phosphorylated on Ser-15 (H2BS14ph) by STK4/MST1 during apoptosis; which facilitates apoptotic chromatin condensation. Also phosphorylated on Ser-15 in response to DNA double strand breaks (DSBs), and in correlation with somatic hypermutation and immunoglobulin class-switch recombination. Post-translationally, glcNAcylation at Ser-113 promotes monoubiquitination of Lys-121. It fluctuates in response to extracellular glucose, and associates with transcribed genes. In terms of processing, ADP-ribosylated by PARP1 or PARP2 on Ser-7 (H2BS6ADPr) in response to DNA damage. H2BS6ADPr promotes recruitment of CHD1L. Poly ADP-ribosylation on Glu-36 (H2BE35ADPr) by PARP1 regulates adipogenesis: it inhibits phosphorylation at Ser-37 (H2BS36ph), thereby blocking expression of pro-adipogenetic genes. Crotonylation (Kcr) is specifically present in male germ cells and marks testis-specific genes in post-meiotic cells, including X-linked genes that escape sex chromosome inactivation in haploid cells. Crotonylation marks active promoters and enhancers and confers resistance to transcriptional repressors. It is also associated with post-meiotically activated genes on autosomes. Post-translationally, lactylated in macrophages by EP300/P300 by using lactoyl-CoA directly derived from endogenous or exogenous lactate, leading to stimulates gene transcription.

The protein localises to the nucleus. It localises to the chromosome. Its function is as follows. Core component of nucleosome. Nucleosomes wrap and compact DNA into chromatin, limiting DNA accessibility to the cellular machineries which require DNA as a template. Histones thereby play a central role in transcription regulation, DNA repair, DNA replication and chromosomal stability. DNA accessibility is regulated via a complex set of post-translational modifications of histones, also called histone code, and nucleosome remodeling. This is Histone H2B type 1-O from Homo sapiens (Human).